We begin with the raw amino-acid sequence, 257 residues long: Deoxyribose-phosphate aldolase (257 aa).

Aspartate 102 acts as the Proton donor/acceptor in catalysis. Residue lysine 166 is the Schiff-base intermediate with acetaldehyde of the active site. Lysine 198 serves as the catalytic Proton donor/acceptor.

Belongs to the DeoC/FbaB aldolase family. DeoC type 2 subfamily.

The protein localises to the cytoplasm. It carries out the reaction 2-deoxy-D-ribose 5-phosphate = D-glyceraldehyde 3-phosphate + acetaldehyde. It participates in carbohydrate degradation; 2-deoxy-D-ribose 1-phosphate degradation; D-glyceraldehyde 3-phosphate and acetaldehyde from 2-deoxy-alpha-D-ribose 1-phosphate: step 2/2. Functionally, catalyzes a reversible aldol reaction between acetaldehyde and D-glyceraldehyde 3-phosphate to generate 2-deoxy-D-ribose 5-phosphate. The chain is Deoxyribose-phosphate aldolase from Shewanella halifaxensis (strain HAW-EB4).